The primary structure comprises 343 residues: Cytoplasmic tRNA 2-thiolation protein 1 (343 aa).

It belongs to the TtcA family. CTU1/NCS6/ATPBD3 subfamily.

The protein localises to the cytoplasm. It participates in tRNA modification; 5-methoxycarbonylmethyl-2-thiouridine-tRNA biosynthesis. Its function is as follows. Plays a central role in 2-thiolation of mcm(5)S(2)U at tRNA wobble positions of tRNA(Lys), tRNA(Glu) and tRNA(Gln). Directly binds tRNAs and probably acts by catalyzing adenylation of tRNAs, an intermediate required for 2-thiolation. It is unclear whether it acts as a sulfurtransferase that transfers sulfur from thiocarboxylated URM1 onto the uridine of tRNAs at wobble position. The protein is Cytoplasmic tRNA 2-thiolation protein 1 of Drosophila pseudoobscura pseudoobscura (Fruit fly).